We begin with the raw amino-acid sequence, 133 residues long: MRTVSMAALVVIAAALAWTSSAELASAPAPGEGPCGKVVHHIMPCLKFVKGEEKEPSKSCCSGTKKLSEEVKTTEQKREACKCIVAATKGISGIKNELVAEVPKKCGITTTLPPITADFDCSKIESTIFRGYY.

The first 31 residues, Met-1 to Gly-31, serve as a signal peptide directing secretion. 4 disulfides stabilise this stretch: Cys-35-Cys-83, Cys-45-Cys-60, Cys-61-Cys-106, and Cys-81-Cys-121.

This sequence belongs to the plant LTP family.

In terms of biological role, plant non-specific lipid-transfer proteins transfer phospholipids as well as galactolipids across membranes. May play a role in wax or cutin deposition in the cell walls of expanding epidermal cells and certain secretory tissues. This is Probable non-specific lipid-transfer protein 2 from Parietaria judaica (Pellitory-of-the-wall).